A 670-amino-acid chain; its full sequence is Kinesin-like protein KIF2B (670 aa).

Threonine 122 is modified (phosphothreonine; by PLK1). Positions 146-173 form a coiled coil; the sequence is CLQEIEKVQKQREKRRRLQQEIRARRAL. At serine 201 the chain carries Phosphoserine; by PLK1. The Kinesin motor domain maps to 210-540; that stretch reads RICVCVRKRP…LRYANRVKEL (331 aa). Residue 300–307 participates in ATP binding; sequence GQTGSGKT.

Belongs to the TRAFAC class myosin-kinesin ATPase superfamily. Kinesin family. MCAK/KIF2 subfamily. In terms of processing, phosphorylation at Thr-122 by PLK1 is required for activity in the correction of kinetochore-microtubules attachment errors, while phosphorylation at Ser-201 also by PLK1 is required for the kinetochore localization and activity in prometaphase.

It is found in the cytoplasm. Its subcellular location is the cytoskeleton. The protein resides in the microtubule organizing center. It localises to the centrosome. The protein localises to the spindle. It is found in the chromosome. Its subcellular location is the centromere. The protein resides in the kinetochore. Functionally, plus end-directed microtubule-dependent motor required for spindle assembly and chromosome movement during mitosis. Has microtubule depolymerization activity. Plays a role in chromosome congression. This is Kinesin-like protein KIF2B (KIF2B) from Macaca fascicularis (Crab-eating macaque).